Reading from the N-terminus, the 878-residue chain is Probable receptor-like protein kinase At4g39110 (878 aa).

Residues 1–43 form the signal peptide; that stretch reads MEIRKKPNIFTVLVIDFSSKPSMALLLAILLFLSGPSASAVAA. The Extracellular segment spans residues 44-440; it reads AAVGPATGFK…GRTTGMGKHG (397 aa). N-linked (GlcNAc...) asparagine glycans are attached at residues Asn170, Asn183, Asn254, Asn317, and Asn382. The chain crosses the membrane as a helical span at residues 441 to 461; it reads MVATAGFVMMFGAFIGLGAMV. The Cytoplasmic portion of the chain corresponds to 462–878; sequence YKWKKRPQDW…FTQFANLNGR (417 aa). Residues 526–798 form the Protein kinase domain; it reads FEASQIIGVG…GDVLWNLEYA (273 aa). ATP-binding positions include 532–540 and Lys554; that span reads IGVGGFGNV. Asp650 (proton acceptor) is an active-site residue. Residues 808–844 are disordered; sequence GKAEETENAKPDVVTPGSVPVSDPSPITPSVTTNEAA.

This sequence belongs to the protein kinase superfamily. Ser/Thr protein kinase family.

It is found in the membrane. The chain is Probable receptor-like protein kinase At4g39110 from Arabidopsis thaliana (Mouse-ear cress).